A 432-amino-acid chain; its full sequence is Serine hydroxymethyltransferase (432 aa).

Residues Leu-131 and 135 to 137 (GHL) each bind (6S)-5,6,7,8-tetrahydrofolate. Lys-240 carries the N6-(pyridoxal phosphate)lysine modification.

It belongs to the SHMT family. In terms of assembly, homodimer. The cofactor is pyridoxal 5'-phosphate.

It localises to the cytoplasm. The enzyme catalyses (6R)-5,10-methylene-5,6,7,8-tetrahydrofolate + glycine + H2O = (6S)-5,6,7,8-tetrahydrofolate + L-serine. The protein operates within one-carbon metabolism; tetrahydrofolate interconversion. Its pathway is amino-acid biosynthesis; glycine biosynthesis; glycine from L-serine: step 1/1. Catalyzes the reversible interconversion of serine and glycine with tetrahydrofolate (THF) serving as the one-carbon carrier. This reaction serves as the major source of one-carbon groups required for the biosynthesis of purines, thymidylate, methionine, and other important biomolecules. Also exhibits THF-independent aldolase activity toward beta-hydroxyamino acids, producing glycine and aldehydes, via a retro-aldol mechanism. This is Serine hydroxymethyltransferase from Bradyrhizobium diazoefficiens (strain JCM 10833 / BCRC 13528 / IAM 13628 / NBRC 14792 / USDA 110).